A 43-amino-acid chain; its full sequence is Protein PsbN (43 aa).

Residues 5–27 (TLIAIFISCSLVSFTGYALYTAF) traverse the membrane as a helical segment.

This sequence belongs to the PsbN family.

It is found in the plastid. The protein localises to the chloroplast thylakoid membrane. Functionally, may play a role in photosystem I and II biogenesis. The polypeptide is Protein PsbN (Lopidium concinnum (Moss)).